The sequence spans 190 residues: Potassium-transporting ATPase KdpC subunit (190 aa).

The helical transmembrane segment at 7-27 (PALLMLLVWTLITGVFYPVLV) threads the bilayer.

This sequence belongs to the KdpC family. As to quaternary structure, the system is composed of three essential subunits: KdpA, KdpB and KdpC.

It is found in the cell inner membrane. Its function is as follows. Part of the high-affinity ATP-driven potassium transport (or Kdp) system, which catalyzes the hydrolysis of ATP coupled with the electrogenic transport of potassium into the cytoplasm. This subunit acts as a catalytic chaperone that increases the ATP-binding affinity of the ATP-hydrolyzing subunit KdpB by the formation of a transient KdpB/KdpC/ATP ternary complex. The polypeptide is Potassium-transporting ATPase KdpC subunit (Methylococcus capsulatus (strain ATCC 33009 / NCIMB 11132 / Bath)).